A 969-amino-acid polypeptide reads, in one-letter code: UvrABC system protein A (969 aa).

32–39 contacts ATP; the sequence is GLSGSGKS. A C4-type zinc finger spans residues 258–286; the sequence is CPNGHPLAVDDLEPRSFSFNSPYGACPEC. ABC transporter domains are found at residues 316-599 and 619-948; these read WSAG…KDSI and VDRK…KFLA. 652 to 659 contacts ATP; the sequence is GVSGSGKS. The C4-type zinc-finger motif lies at 751 to 777; it reads CEACTGDGTIKIEMNFLPDVYVPCEVC.

This sequence belongs to the ABC transporter superfamily. UvrA family. In terms of assembly, forms a heterotetramer with UvrB during the search for lesions.

The protein localises to the cytoplasm. In terms of biological role, the UvrABC repair system catalyzes the recognition and processing of DNA lesions. UvrA is an ATPase and a DNA-binding protein. A damage recognition complex composed of 2 UvrA and 2 UvrB subunits scans DNA for abnormalities. When the presence of a lesion has been verified by UvrB, the UvrA molecules dissociate. This is UvrABC system protein A from Mycobacterium leprae (strain TN).